The sequence spans 437 residues: Sorting nexin-30 (437 aa).

2 disordered regions span residues 1–44 and 54–73; these read MAGG…PDLL and LILPNGGTPAGTSSPASSSS. Phosphothreonine is present on Thr38. Phosphoserine is present on Ser40. Residues 63–73 show a composition bias toward low complexity; sequence AGTSSPASSSS. Residues 89–210 enclose the PX domain; the sequence is RDLFVIVDDP…IFLTAKDLNA (122 aa). Residues Arg132, Gln134, Lys162, and Arg176 each contribute to the a 1,2-diacyl-sn-glycero-3-phospho-(1D-myo-inositol-3-phosphate) site. Residues 234–437 form the BAR domain; sequence KLRTRPLEFA…PLLQEKQEAK (204 aa).

This sequence belongs to the sorting nexin family. Heterodimer; heterodimerizes with SNX4.

It localises to the early endosome membrane. Involved in the regulation of endocytosis and in several stages of intracellular trafficking. Together with SNX4, involved in autophagosome assembly. This is Sorting nexin-30 from Homo sapiens (Human).